Consider the following 580-residue polypeptide: D-erythrulose kinase (580 aa).

The DhaK domain occupies 7–327 (DPARFTEDML…WAAPADTPAY (321 aa)). The Tele-hemiaminal-histidine intermediate role is filled by H217. Residues 329–360 (KGAAQQHVSGERRSEATARSASSGPKLAELSD) are disordered. The 203-residue stretch at 368–570 (RLVARAFDAM…LALCARTVAD (203 aa)) folds into the DhaL domain. Residues 397-403 (DGDHGRG), 443-444 (TS), G485, R542, and 555-557 (DAG) contribute to the ATP site.

The catalysed reaction is D-erythrulose + ATP = D-erythrulose 4-phosphate + ADP + H(+). It functions in the pathway carbohydrate metabolism; erythritol degradation. It participates in carbohydrate metabolism; D-threitol degradation. Its function is as follows. Catalyzes the phosphorylation of D-erythrulose to D-erythrulose-4P. Involved in the degradation pathways of erythritol and D-threitol, that allow M.smegmatis to grow on these compounds as the sole carbon source. The protein is D-erythrulose kinase of Mycolicibacterium smegmatis (strain ATCC 700084 / mc(2)155) (Mycobacterium smegmatis).